Here is a 162-residue protein sequence, read N- to C-terminus: Austinoid biosynthesis clusters protein J (162 aa).

It belongs to the trt14 isomerase family. As to quaternary structure, homodimer.

The protein operates within secondary metabolite biosynthesis; terpenoid biosynthesis. Functionally, part of the gene cluster B that mediates the biosynthesis of austinol and dehydroaustinol, two fungal meroterpenoids. The first step of the pathway is the synthesis of 3,5-dimethylorsellinic acid by the polyketide synthase ausA. 3,5-dimethylorsellinic acid is then prenylated by the polyprenyl transferase ausN. Further epoxidation by the FAD-dependent monooxygenase ausM and cyclization by the probable terpene cyclase ausL lead to the formation of protoaustinoid A. Protoaustinoid A is then oxidized to spiro-lactone preaustinoid A3 by the combined action of the FAD-binding monooxygenases ausB and ausC, and the dioxygenase ausE. Acid-catalyzed keto-rearrangement and ring contraction of the tetraketide portion of preaustinoid A3 by ausJ lead to the formation of preaustinoid A4. The aldo-keto reductase ausK, with the help of ausH, is involved in the next step by transforming preaustinoid A4 into isoaustinone which is in turn hydroxylated by the P450 monooxygenase ausI to form austinolide. Finally, the cytochrome P450 monooxygenase ausG modifies austinolide to austinol. Austinol can be further modified to dehydroaustinol which forms a diffusible complex with diorcinol that initiates conidiation. Due to genetic rearrangements of the clusters and the subsequent loss of some enzymes, the end products of the Emericella nidulans austinoid biosynthesis clusters are austinol and dehydroaustinol, even if additional enzymes, such as the O-acetyltransferase ausQ and the cytochrome P450 monooxygenase ausR are still functional. The protein is Austinoid biosynthesis clusters protein J of Emericella nidulans (strain FGSC A4 / ATCC 38163 / CBS 112.46 / NRRL 194 / M139) (Aspergillus nidulans).